We begin with the raw amino-acid sequence, 299 residues long: MQFKYLFTVIIPTYNCGQYIPKALDSLLLQGEYFTKTQVLIVNDGSTDNTKQIVEPYTQQYSNIEYLEKPNGNWGSVVNFVKQNQLAKGQYITVLDSDDYFLANAFQRVAAHFGHDMIVSAFYCYISPKRRRFLKPYFGKTGVIEQKTKLRTPHSQPLAKFYRHEIFHLLDPLKEKLFYQDCLLYHNAINKVQSVFYICEPLAVWYATRPGNSTTMPWNNADKFQAWCDLLKQMNLYGAGIVIYIYTMLPGFLKELKRQQLVLDLAKKPAYTWLPQPLAFLFGGLMALRTRKYIRYPKN.

Belongs to the glycosyltransferase 2 family.

This is an uncharacterized protein from Mycoplasma pneumoniae (strain ATCC 29342 / M129 / Subtype 1) (Mycoplasmoides pneumoniae).